The primary structure comprises 528 residues: Probable rhamnogalacturonate lyase A (528 aa).

The first 20 residues, 1–20 (MLSKATLLLFLPSWARVTYA), serve as a signal peptide directing secretion. An N-linked (GlcNAc...) asparagine glycan is attached at asparagine 46. Cysteine 50 and cysteine 93 are disulfide-bonded. The N-linked (GlcNAc...) asparagine glycan is linked to asparagine 148. A disulfide bridge links cysteine 184 with cysteine 193. Asparagine 351 carries N-linked (GlcNAc...) asparagine glycosylation.

The protein belongs to the polysaccharide lyase 4 family.

The protein localises to the secreted. It catalyses the reaction Endotype eliminative cleavage of L-alpha-rhamnopyranosyl-(1-&gt;4)-alpha-D-galactopyranosyluronic acid bonds of rhamnogalacturonan I domains in ramified hairy regions of pectin leaving L-rhamnopyranose at the reducing end and 4-deoxy-4,5-unsaturated D-galactopyranosyluronic acid at the non-reducing end.. In terms of biological role, pectinolytic enzymes consist of four classes of enzymes: pectin lyase, polygalacturonase, pectin methylesterase and rhamnogalacturonase. Degrades the rhamnogalacturonan I (RG-I) backbone of pectin. In Aspergillus fumigatus (strain CBS 144.89 / FGSC A1163 / CEA10) (Neosartorya fumigata), this protein is Probable rhamnogalacturonate lyase A (rglA).